Reading from the N-terminus, the 162-residue chain is Lectin BRA-3 (162 aa).

The N-terminal stretch at 1-24 (MQRSEIVQAVTLLVVVFAITTAEC) is a signal peptide. A C-type lectin domain is found at 25-152 (TCPGNLDWQE…NKNKNFLCKM (128 aa)). 3 cysteine pairs are disulfide-bonded: Cys26-Cys39, Cys56-Cys150, and Cys125-Cys142.

As to quaternary structure, homotetramer; disulfide-linked. As to expression, coelemic fluid.

Sugar-binding protein which recognizes specific carbohydrate structures and agglutinates a variety of animal cells by binding to cell-surface glycoproteins and glycolipids. Calcium-dependent lectin. Invertebrate lectins may be involved in defense functions. The protein is Lectin BRA-3 of Megabalanus rosa (Acorn barnacle).